Reading from the N-terminus, the 455-residue chain is Argininosuccinate lyase (455 aa).

Belongs to the lyase 1 family. Argininosuccinate lyase subfamily.

Its subcellular location is the cytoplasm. The enzyme catalyses 2-(N(omega)-L-arginino)succinate = fumarate + L-arginine. Its pathway is amino-acid biosynthesis; L-arginine biosynthesis; L-arginine from L-ornithine and carbamoyl phosphate: step 3/3. In Shewanella baltica (strain OS223), this protein is Argininosuccinate lyase.